Reading from the N-terminus, the 821-residue chain is Calpain-3 (821 aa).

The segment at 7 to 37 is disordered; that stretch reads ASVAPRTAAEPRSPGPVPHPAQSKATEAGGG. A Calpain catalytic domain is found at 74–417; that stretch reads LYVDPEFPPD…FTKLEICNLT (344 aa). Active-site residues include Cys-129, His-334, and Asn-358. Positions 418 to 586 are domain III; it reads ADALQSDKLQ…KRNLSEEVEN (169 aa). The tract at residues 587 to 649 is linker; sequence TISVDRPVKK…QPGSSDQESE (63 aa). The disordered stretch occupies residues 609–652; the sequence is ANSNKELGVDQESEEGKGKTSPDKQKQSPQPQPGSSDQESEEQQ. Residues 622-634 are compositionally biased toward basic and acidic residues; the sequence is EEGKGKTSPDKQK. Residues 635–645 show a composition bias toward low complexity; sequence QSPQPQPGSSD. 4 EF-hand domains span residues 649–683, 692–725, 722–757, and 787–821; these read EEQQ…VVNK, FTLE…NKIK, NKIK…AGFH, and VRLE…TMYA. The interval 650 to 821 is domain IV; that stretch reads EQQQFRNIFK…LEWLQLTMYA (172 aa). 18 residues coordinate Ca(2+): Ala-662, Asp-665, Glu-667, Glu-672, Asp-705, Asp-707, Ser-709, Lys-711, Glu-716, Asp-735, Asp-737, Ser-739, Thr-741, Glu-746, Asp-800, Asp-802, Asp-804, and Ile-806.

This sequence belongs to the peptidase C2 family. In terms of assembly, homodimer; via EF-hand domain 4. Interacts with TTN/titin. Interacts with CMYA5; this interaction, which results in CMYA5 proteolysis, may protect CAPN3 from autolysis. Interacts with SIMC1. Interacts with UTP25; the interaction is required for CAPN3 translocation to the nucleolus. In terms of tissue distribution, isoform I is skeletal muscle specific.

It localises to the cytoplasm. The protein resides in the nucleus. The protein localises to the nucleolus. It catalyses the reaction Broad endopeptidase activity.. With respect to regulation, activated by micromolar concentrations of calcium and inhibited by calpastatin. In terms of biological role, calcium-regulated non-lysosomal thiol-protease. Proteolytically cleaves CTBP1 at 'His-409'. Mediates, with UTP25, the proteasome-independent degradation of p53/TP53. This is Calpain-3 from Homo sapiens (Human).